The following is a 470-amino-acid chain: Argininosuccinate lyase (470 aa).

Belongs to the lyase 1 family. Argininosuccinate lyase subfamily.

It is found in the cytoplasm. It carries out the reaction 2-(N(omega)-L-arginino)succinate = fumarate + L-arginine. The protein operates within amino-acid biosynthesis; L-arginine biosynthesis; L-arginine from L-ornithine and carbamoyl phosphate: step 3/3. The chain is Argininosuccinate lyase from Synechococcus sp. (strain WH7803).